The primary structure comprises 247 residues: MLSSSDSKVEPALKKQKYQDKAIDLDKSEEFDKFFLDFNQNQIYQNNSRDLGEQYEPPSNAEPNDLNEEINKALSTFNEFNQTNSIKLSFKNEANSSATESSSPMDSPGTLTSSVTSNDEEVYADDSKQNPSHRISNVQSNSDDQASMTNMVNQSTLTSIKQSMINTSKLISTFTTLKTTYLKLCKEFNYLLNKFKDNEKIKIELINENNELKHLLMEIIKQRELEKSTTRHTTPISNSRKRKCPSS.

Disordered regions lie at residues 95–146 (NSSA…DDQA) and 226–247 (EKST…CPSS). Over residues 129–146 (QNPSHRISNVQSNSDDQA) the composition is skewed to polar residues.

The protein localises to the cytoplasm. Its subcellular location is the nucleus. Its function is as follows. Involved in cation homeostasis and in the regulation of the cation stress signaling cascades. The chain is Protein ATC1/LIC4 (ATC1) from Debaryomyces hansenii (strain ATCC 36239 / CBS 767 / BCRC 21394 / JCM 1990 / NBRC 0083 / IGC 2968) (Yeast).